A 203-amino-acid polypeptide reads, in one-letter code: Somatotropin (203 aa).

Residues 1–17 (MDRVVIVLSVLSVAASS) form the signal peptide. Glutamine 18 carries the post-translational modification Pyrrolidone carboxylic acid. Position 35 (histidine 35) interacts with Zn(2+). A disulfide bridge connects residues cysteine 68 and cysteine 176. Glutamate 185 provides a ligand contact to Zn(2+). Cysteines 193 and 201 form a disulfide.

Belongs to the somatotropin/prolactin family.

The protein localises to the secreted. Growth hormone plays an important role in growth control and is involved in the regulation of several anabolic processes. Implicated as an osmoregulatory substance important for seawater adaptation. This Solea senegalensis (Senegalese sole) protein is Somatotropin (gh).